We begin with the raw amino-acid sequence, 122 residues long: Large ribosomal subunit protein uL14 (122 aa).

The protein belongs to the universal ribosomal protein uL14 family. In terms of assembly, part of the 50S ribosomal subunit. Forms a cluster with proteins L3 and L19. In the 70S ribosome, L14 and L19 interact and together make contacts with the 16S rRNA in bridges B5 and B8.

Functionally, binds to 23S rRNA. Forms part of two intersubunit bridges in the 70S ribosome. This Chlamydia pneumoniae (Chlamydophila pneumoniae) protein is Large ribosomal subunit protein uL14.